The following is a 2641-amino-acid chain: MGIKLRRLTAGICLVTQLAFPMAAAAQGVVNAATPQPVPAQIAIANANTVPYILGALESAQSVAERFGISVAELRKLNQFRTFARGFDNVRQGDELDVPAQVSEKKLTPPPGNSSDNLEQQIASTSQQIGSLLAEDMNSEQAANMARGWASSQASGVMTDWLSRFGTARITLGVDEDFSLKNSQFDFLHPRYETPDNLFFSQHTLHRTDERTQINNGLGWRHFTPTWMSGINFFFDHDLSRYHSRAGIGAEYWRDYLKLSSNGYLRLTNWRSAPELDNDYEARPANGWDVRAEGWLPAWPHLGGKLVYEQYYGDEVALFDKDDRQSNPHAITAGLNYTPFPLMTFSAEQRQGKQGENDTRFAVDFTWQPGSAMQKQLDPNEVAARRSLAGSRYDLVDRNNNIVLEYRKKELVRLTLTDPVTGKSGEVKSLVSSLQTKYALKGYNVEATALEAAGGKVVTTGKDILVTLPGYRFTSTPETDNTWPIEVTAEDVKGNFSNREQSMVVVQAPALSQKDSSVSLSTQTLSADSHSTATLTFIAHDAAGNPVIGLVLSTRHEGVQDITLSDWKDNGDGSYTQVLTTGAMSGTLTLMPQLNGVDAAKAPAVVNIISVSSSRTHSSIKIDKDRYLSGNPIEVTVELRDENDKPVKEQKQQLNTAVSIDNVKPGVTTDWKETADGVYKATYTAYTKGSGLTAKLLMQNWNEDLHTAGFIIDANPQSAKIATLSASNNGVLANENAANTVSVNVADEGSNPINDHTVTFAVLNGSATSFNNQNTAKTDVNGLATFDLKSSKQEDNTVEVTLENGVKQTLIVSFVGDSSTAQVDLQKSKNEVVADGNDSATMTATVRDAKGNLLNDVKVTFNVNSAEAKLSQTEVNSHDGIATATLTSLKNGDYRVTASVSSGSQANQQVNFIGDQSTAALTLSVPSGDITVTNTAPQHMTATLQDKNGNPLKDKEITFTVPNDVASRFSISNGGKGMTDSNGVAIASLTGTLAGTHMITARLANSNVSDTQPMTFVADKDSAVVVLQTSKAEIIGNGVDETTLTATVKDPFDNVVKNLSVVFRTSPADTQLSLNTRNTNENGIAEVTLKGTVLGVHTAEAILLNGNRDTKTVNIAPDTSNAQVTLNIPAQQVVTNNSDSVQLTATVKDPSNHPVAGITVNFTMPQDVAANFTLENNGIAITQANGEAHVTLKGKKAGTHTVTATLGNNNASDAQPVTFVADKDSAVVVLQTSKAEIIGNGVDETTLTATVKDPFDNVVIDLPVTFSTNPADTQLSQSTSNTNDSGVAEVTLKGTVLGVHTAEATLPNGNNDTKTVNIAPDASNAQVTLNIPAQQVVTNNSDSVQLTATVKDPSNHPVAGITVNFTMPQDVAANFTLENNGIAITQANGEAHVTLKGKKAGTHTVTVTLSNNNTSDSQPVTFVADKTSAQVVLQISKNEITGNGVDSATLTATVKDQFDNEVNNLPVTFSTASSGLTLTPGESNTNESGIAQATLAGVAFGEQTVTASLANTGASDNKTVHFIGDTAAAKIIELTPVPDSIFAGTPQNSTGSVITATVVDNNGFPVKGVTVNFTSRTNSAEMTNGGQAVTNEQGKATVTYTNTRSSIESGARPDTVEASLENGSSTLSTSINVNADASTAHLTLLHALFDTVSAGETTSLYIEVKDNYGNGVPQHQVTLSVSPSEGVTPSNNGIYTTNYYGNFYASFTATKAGVYQVTATLENGDSMQQTVTYVPNVANAEISLAASKDPVIADNNDLTTLTATVADTEGNAIANTEVTFTLPEDVRANFTLSDGGKAITDTEGKAKVTLKGTKAGAHTVTASMAGGKSGQLVVNFTADTLTAQVNLNVTEDNFIANNVGMTTLQATVTDGNGNPLANEAVTFTLPADVSASFTLGQGGSAITDINGKAEVTLSGTKSGTYPVTVSVNNYGVSDTKQVTLIADAGTAKLTSLTSVYSFVVSTTEGATMTASVTDANGNPVEGIKVNFRGTSVTLSSTSVETDSQGFAEILVTSTEVGLKTVSASLADKPTEVISRLLNASADVNSATFTSLEIPEGQVMVAQDVAVKAHVNDQFGNPVAHQPVTFSAEPSSQMIISQNTVSTNTQGIAEVTMTPERNGSYMVKASLANGASIEKQLEAIDEKLTLTASSPLIGVNSPTGATLTATLTSANGTPVEGQVINFSVTPEGATLSGGKVRTNSSGQAPVVLTSNKVGTYTVTASFHNGVTIQTQTTVKVTGNSSTAHVASFIADPSTIAATNSDLSTLKATVEDGSGNLIEGLTVYFALKSGSATLTTLTAVTDQNGIATTSVKGAMTGSVTVSAVTTAGGMQTVDITLVAGPADASQSVLKNNRSSLKGDYTDSAELHLVLYDISGNPIKVSEGMEFVQSGTNVPYVKISAIDYSQNINGDYKATVTGGGEGIATLIPVLNGVHQAGLSTTIQFTRAEDKIMSGTVLVNGANLPTTTFPSQGFTGAYYQLNNDNFAPGKTAADYEFSSSGSWVDVDATGKVTFKNVGSKWERITATPKTGGPSYIYEIRVKSWWVNAGDAFMIYSLAENFCSSNGYTLPLGDHLNHSRSRGIGSLYSEWGDMGHYTTEAGFQSNMYWSSSPANSSEQYVISLATGEQSVYEKLGFAHATCYKNL.

An N-terminal signal peptide occupies residues 1 to 26 (MGIKLRRLTAGICLVTQLAFPMAAAA). One can recognise a LysM domain in the interval 50–98 (VPYILGALESAQSVAERFGISVAELRKLNQFRTFARGFDNVRQGDELDV). Positions 99–118 (PAQVSEKKLTPPPGNSSDNL) are disordered. Residues 125-400 (TSQQIGSLLA…SRYDLVDRNN (276 aa)) form an inverse autotransporter region. Residues 513-605 (QKDSSVSLST…GVDAAKAPAV (93 aa)) are invasin 3 domain. Big-1 domains follow at residues 617-711 (HSSI…AGFI), 721-815 (IATL…VSFV), 822-913 (QVDL…VNFI), 920-1017 (ALTL…MTFV), 1024-1116 (VVVL…VNIA), 1123-1220 (QVTL…VTFV), 1227-1319 (VVVL…VNIA), 1326-1423 (QVTL…VTFV), 1430-1523 (QVVL…VHFI), 1531-1633 (IIEL…SINV), 1641-1734 (HLTL…VTYV), 1741-1837 (EISL…VNFT), 1844-1941 (QVNL…VTLI), 1948-2032 (KLTS…PTEV), 2048-2139 (FTSL…LEAI), 2142-2236 (KLTL…VKVT), and 2244-2336 (VASF…ITLV). The interval 2538 to 2641 (KSWWVNAGDA…FAHATCYKNL (104 aa)) is C-type lectin domain.

The protein belongs to the intimin/invasin family.

It localises to the cell outer membrane. Functionally, a probable inverse autotransporter, it may be involved in biofilm formation and cell adhesion. May bind peptidoglycan via its LysM domain. Upon overexpression shows increased mature biofilm formation. The polypeptide is Inverse autotransporter adhesin YeeJ (Escherichia coli O17:K52:H18 (strain UMN026 / ExPEC)).